Consider the following 324-residue polypeptide: Probable pectinesterase A (324 aa).

Positions 1–19 (MHLPSLVLGLLGLGLTASA) are cleaved as a signal peptide. A glycan (N-linked (GlcNAc...) asparagine) is linked at Asn27. Gln142 is a substrate binding site. The active-site Proton donor is Asp165. Residue Asp186 is the Nucleophile of the active site. Asn191 carries N-linked (GlcNAc...) asparagine glycosylation. Positions 246 and 248 each coordinate substrate.

Belongs to the pectinesterase family.

It localises to the secreted. The enzyme catalyses [(1-&gt;4)-alpha-D-galacturonosyl methyl ester](n) + n H2O = [(1-&gt;4)-alpha-D-galacturonosyl](n) + n methanol + n H(+). It functions in the pathway glycan metabolism; pectin degradation; 2-dehydro-3-deoxy-D-gluconate from pectin: step 1/5. Its function is as follows. Involved in maceration and soft-rotting of plant tissue. The protein is Probable pectinesterase A (pmeA) of Neosartorya fischeri (strain ATCC 1020 / DSM 3700 / CBS 544.65 / FGSC A1164 / JCM 1740 / NRRL 181 / WB 181) (Aspergillus fischerianus).